The following is a 327-amino-acid chain: uncharacterized protein (327 aa).

4 helical membrane-spanning segments follow: residues 68–88 (SIPAVLFWSVIIPAILYLFYP), 92–112 (FLHLWLWTLLAVVLHVFVDIF), 127–147 (WVALGLINTFDPFIFISHLAA), and 148–168 (IAIWYAGGSPGITFLSLYIIL).

It localises to the cell membrane. May act as a negative regulator for the transcription of mutY, fabL, sspE and yfhP. This is an uncharacterized protein from Bacillus subtilis (strain 168).